The sequence spans 22 residues: Brain peptide MVPVPVHHMADELLRNGPDTVI (22 aa).

The protein is Brain peptide MVPVPVHHMADELLRNGPDTVI of Apis mellifera (Honeybee).